Consider the following 252-residue polypeptide: Neurovirulence factor ICP34.5 (252 aa).

Basic residues predominate over residues 1–15; the sequence is MARRRRRHRGPRRPR. The segment at 1-17 is required for nucleolar localization; the sequence is MARRRRRHRGPRRPRPP. Disordered stretches follow at residues 1–129 and 150–179; these read MARR…PFRL and RRAG…PATP. Positions 25–36 are enriched in polar residues; that stretch reads TAQSQVTSTPNS. Over residues 46–59 the composition is skewed to pro residues; sequence AAPPPPPAGGPPPS. The span at 74–84 shows a compositional bias: acidic residues; sequence ASDDDDDDDWP. Pro residues-rich tracts occupy residues 85-94 and 120-129; these read DSPPPEPAPE and SHPPSRPFRL. Positions 129–138 match the Nuclear export signal motif; that stretch reads LPPRLALRLR. 6 tandem repeats follow at residues 162–164, 165–167, 168–170, 171–173, 174–176, and 177–179. The 6 X 3 AA tandem repeats of A-T-P stretch occupies residues 162–179; it reads ATPATPATPATPATPATP. The span at 165-179 shows a compositional bias: low complexity; that stretch reads ATPATPATPATPATP. The tract at residues 179–192 is binding to PP1CA; the sequence is PARVRFSPHVRVRH. Residues 179–192 are interaction with host PPP1CA; it reads PARVRFSPHVRVRH. The important for interferon resistance stretch occupies residues 194–252; sequence VVWASAARLARRGSWARERADRARFRRRVAEAEAVIGPCLGPKARARALARGAGPANSV. A Bipartite nuclear localization signal motif is present at residues 204-222; it reads RRGSWARERADRARFRRRV. Residues 222-237 are interaction with host EIF2S1/EIF-2ALPHA; sequence VAEAEAVIGPCLGPKA.

This sequence belongs to the PPP1R15 family. As to quaternary structure, interacts with host PPP1CA to form a high-molecular-weight complex that dephosphorylates EIF2S1/eIF-2alpha. Interacts with host EIF2S1/eIF-2alpha; this interaction is crucial for the specific dephosphorylation of EIF2S1/eIF-2alpha by PPP1CA. Binds to proliferating cell nuclear antigen (PCNA), which may release host cells from growth arrest and facilitate viral replication. Interacts (via N-terminus) with host C1QBP and PRKCA. Interacts with protein UL31. Interacts with host TBK1. Interacts with host STING/TMEM173; this interaction inhibits the intracellular DNA sensing pathway. Interacts with host BECN1; this interaction modulates host autophagy.

It localises to the host cytoplasm. The protein localises to the host nucleus. The protein resides in the host nucleolus. It is found in the virion. Inhibits the establishment of the immune response and of the integrated stress response (ISR) in the infected cell. Plays essential roles in viral nuclear egress to mediate capsid transit across the nuclear membrane. Facilitates nuclear egress cooperatively with host C1QBP and protein kinase C/PKC to induce lamin A/C phosphorylation and subsequent reorganization. In turn, lamina disassembles and nuclear egress occurs. Recruits the serine/threonine protein phosphatase PPP1CA/PP1-alpha to dephosphorylate the translation initiation factor EIF2S1/eIF-2alpha, thereby couteracting the host shutoff of protein synthesis involving double-stranded RNA-dependent protein kinase EIF2AK2/PKR. In turn, controls host IRF3 activation and subsequently inhibits host interferon response. Controls the DNA sensing pathway by interacting with and inhibiting host STING/TMEM173. Also down-modulates the host MHC class II proteins cell surface expression. Acts as a neurovirulence factor that has a profound effect on the growth of the virus in central nervous system tissue, by interacting with host BECN1 and thereby antagonizing the host autophagy response. The polypeptide is Neurovirulence factor ICP34.5 (RL1) (Human herpesvirus 1 (strain CVG-2) (HHV-1)).